The sequence spans 395 residues: 1-deoxy-D-xylulose 5-phosphate reductoisomerase (395 aa).

The NADPH site is built by Thr-10, Gly-11, Ser-12, Ile-13, Ala-36, and Asn-123. 1-deoxy-D-xylulose 5-phosphate is bound at residue Lys-124. Position 125 (Glu-125) interacts with NADPH. Position 149 (Asp-149) interacts with Mn(2+). Ser-150, Glu-151, Ser-185, and His-208 together coordinate 1-deoxy-D-xylulose 5-phosphate. Mn(2+) is bound at residue Glu-151. Gly-214 provides a ligand contact to NADPH. The 1-deoxy-D-xylulose 5-phosphate site is built by Ser-221, Asn-226, Lys-227, and Glu-230. Glu-230 is a Mn(2+) binding site.

This sequence belongs to the DXR family. Requires Mg(2+) as cofactor. Mn(2+) is required as a cofactor.

It carries out the reaction 2-C-methyl-D-erythritol 4-phosphate + NADP(+) = 1-deoxy-D-xylulose 5-phosphate + NADPH + H(+). Its pathway is isoprenoid biosynthesis; isopentenyl diphosphate biosynthesis via DXP pathway; isopentenyl diphosphate from 1-deoxy-D-xylulose 5-phosphate: step 1/6. Functionally, catalyzes the NADPH-dependent rearrangement and reduction of 1-deoxy-D-xylulose-5-phosphate (DXP) to 2-C-methyl-D-erythritol 4-phosphate (MEP). The polypeptide is 1-deoxy-D-xylulose 5-phosphate reductoisomerase (Shewanella amazonensis (strain ATCC BAA-1098 / SB2B)).